The chain runs to 101 residues: Small ribosomal subunit protein bS18c (101 aa).

This sequence belongs to the bacterial ribosomal protein bS18 family. Part of the 30S ribosomal subunit.

It is found in the plastid. Its subcellular location is the chloroplast. This chain is Small ribosomal subunit protein bS18c, found in Eucalyptus globulus subsp. globulus (Tasmanian blue gum).